Reading from the N-terminus, the 1176-residue chain is Myosin light chain kinase, smooth muscle (1176 aa).

The segment at 1–41 (MDFRANLQRQVKPKTLSEEERKVHGPQQVDFRSVLAKKGTP) is actin-binding (calcium/calmodulin-sensitive). Residues 1–354 (MDFRANLQRQ…SEKRPESRGT (354 aa)) are disordered. A calmodulin-binding region spans residues 26–41 (PQQVDFRSVLAKKGTP). Positions 43 to 55 (TPVPEKVPPPKPA) are enriched in pro residues. 16 tandem repeats follow at residues 100 to 111 (FLKPVGNAKLAD), 112 to 123 (TPKPLSSTKPAE), 124 to 135 (TPKPLGNVKPAE), 136 to 147 (TPKPLGSTKPAE), 148 to 159 (TPKPLGSTKPAE), 160 to 171 (TPKPLGNVKPAE), 172 to 183 (TPKPLGNIKPTE), 184 to 195 (TPKPLGSTKPAE), 196 to 207 (TPKPLGSTKPAE), 208 to 219 (TPKPLGNVKPAE), 220 to 231 (TPKPLGNVKPAE), 232 to 243 (TPKPLGNVKPAE), 244 to 255 (TPKPVSNAKPAE), 256 to 267 (TLKPVGNAKPAE), 268 to 279 (TPKPLSNVKPAE), and 280 to 291 (TPKLVGNAKPAE). The 16 X 12 AA tandem repeats stretch occupies residues 100 to 291 (FLKPVGNAKL…KLVGNAKPAE (192 aa)). S202 bears the Phosphoserine mark. The tract at residues 319 to 721 (PTGKEELKKE…TVTVNTEQKV (403 aa)) is actin-binding (calcium/calmodulin-insensitive). A compositionally biased stretch (basic and acidic residues) spans 320–335 (TGKEELKKEIKNDVNC). The 89-residue stretch at 356–444 (PTFEEKLQDL…GQAESSCQVT (89 aa)) folds into the Ig-like C2-type 1 domain. C377 and C428 are oxidised to a cystine. The disordered stretch occupies residues 448–497 (PDAPTSENAKAPEMKARRPKSSLPPVLGTESDATVKKKPAPKTPPKAAMP). In terms of domain architecture, Ig-like C2-type 2 spans 498-586 (PQIIQFPEDQ…GSRQAQVNLT (89 aa)). The region spanning 594-686 (PAGTPCASDI…QESELTALGE (93 aa)) is the Fibronectin type-III domain. Residues 673–707 (SEPSQESELTALGEKPEEEPKDEVEVSDDDEKEPE) are disordered. The segment covering 688–706 (PEEEPKDEVEVSDDDEKEP) has biased composition (acidic residues). S699 carries the phosphoserine modification. At Y710 the chain carries Phosphotyrosine; by ABL1. A Protein kinase domain is found at 725-980 (YDIEERLGSG…CTQCLQHPWL (256 aa)). ATP is bound by residues 731–739 (LGSGKFGQV) and K754. The residue at position 836 (Y836) is a Phosphotyrosine; by ABL1. D846 (proton acceptor) is an active-site residue. A Phosphotyrosine; by ABL1 modification is found at Y896. The interval 972–1035 (TQCLQHPWLM…SGLSGRKSST (64 aa)) is calmodulin-binding. Phosphoserine occurs at positions 1020, 1021, 1033, 1034, and 1037. At T1039 the chain carries Phosphothreonine. Position 1040 is a phosphoserine (S1040). The region spanning 1069–1158 (PYFSKTIRDL…GEATCTAELI (90 aa)) is the Ig-like C2-type 3 domain. A disulfide bridge links C1090 with C1142.

This sequence belongs to the protein kinase superfamily. CAMK Ser/Thr protein kinase family. As to quaternary structure, all isoforms including Telokin bind calmodulin. Interacts with SVIL. Interacts with CTTN; this interaction is reduced during thrombin-induced endothelial cell (EC) contraction but is promoted by the barrier-protective agonist sphingosine 1-phosphate (S1P) within lamellipodia. A complex made of ABL1, CTTN and MYLK regulates cortical actin-based cytoskeletal rearrangement critical to sphingosine 1-phosphate (S1P)-mediated endothelial cell (EC) barrier enhancement. Binds to NAA10/ARD1 and PTK2B/PYK2. It depends on Mg(2+) as a cofactor. Ca(2+) serves as cofactor. The C-terminus is deglutamylated by AGTPBP1/CCP1, AGBL1/CCP4 and AGBL4/CCP6, leading to the formation of Myosin light chain kinase, smooth muscle, deglutamylated form. The consequences of C-terminal deglutamylation are unknown. In terms of processing, can probably be down-regulated by phosphorylation. Tyrosine phosphorylation by ABL1 increases kinase activity, reverses MLCK-mediated inhibition of Arp2/3-mediated actin polymerization, and enhances CTTN-binding. Phosphorylation by SRC promotes CTTN binding.

It is found in the cytoplasm. The protein resides in the cell projection. It localises to the lamellipodium. The protein localises to the cleavage furrow. Its subcellular location is the cytoskeleton. It is found in the stress fiber. It carries out the reaction L-seryl-[myosin light chain] + ATP = O-phospho-L-seryl-[myosin light chain] + ADP + H(+). It catalyses the reaction L-threonyl-[myosin light chain] + ATP = O-phospho-L-threonyl-[myosin light chain] + ADP + H(+). Calcium/calmodulin-dependent myosin light chain kinase implicated in smooth muscle contraction via phosphorylation of myosin light chains (MLC). Also regulates actin-myosin interaction through a non-kinase activity. Phosphorylates PTK2B/PYK2 and myosin light-chains. Involved in the inflammatory response (e.g. apoptosis, vascular permeability, leukocyte diapedesis), cell motility and morphology, airway hyperreactivity and other activities relevant to asthma. Required for tonic airway smooth muscle contraction that is necessary for physiological and asthmatic airway resistance. Necessary for gastrointestinal motility. Implicated in the regulation of endothelial as well as vascular permeability, probably via the regulation of cytoskeletal rearrangements. In the nervous system it has been shown to control the growth initiation of astrocytic processes in culture and to participate in transmitter release at synapses formed between cultured sympathetic ganglion cells. Critical participant in signaling sequences that result in fibroblast apoptosis. Plays a role in the regulation of epithelial cell survival. Required for epithelial wound healing, especially during actomyosin ring contraction during purse-string wound closure. Mediates RhoA-dependent membrane blebbing. Triggers TRPC5 channel activity in a calcium-dependent signaling, by inducing its subcellular localization at the plasma membrane. Promotes cell migration (including tumor cells) and tumor metastasis. PTK2B/PYK2 activation by phosphorylation mediates ITGB2 activation and is thus essential to trigger neutrophil transmigration during acute lung injury (ALI). May regulate optic nerve head astrocyte migration. Probably involved in mitotic cytoskeletal regulation. Regulates tight junction probably by modulating ZO-1 exchange in the perijunctional actomyosin ring. Mediates burn-induced microvascular barrier injury; triggers endothelial contraction in the development of microvascular hyperpermeability by phosphorylating MLC. Essential for intestinal barrier dysfunction. Mediates Giardia spp.-mediated reduced epithelial barrier function during giardiasis intestinal infection via reorganization of cytoskeletal F-actin and tight junctional ZO-1. Necessary for hypotonicity-induced Ca(2+) entry and subsequent activation of volume-sensitive organic osmolyte/anion channels (VSOAC) in cervical cancer cells. The sequence is that of Myosin light chain kinase, smooth muscle (MYLK) from Bos taurus (Bovine).